A 121-amino-acid polypeptide reads, in one-letter code: Large ribosomal subunit protein bL12 (121 aa).

Belongs to the bacterial ribosomal protein bL12 family. In terms of assembly, homodimer. Part of the ribosomal stalk of the 50S ribosomal subunit. Forms a multimeric L10(L12)X complex, where L10 forms an elongated spine to which 2 to 4 L12 dimers bind in a sequential fashion. Binds GTP-bound translation factors.

Functionally, forms part of the ribosomal stalk which helps the ribosome interact with GTP-bound translation factors. Is thus essential for accurate translation. This Pseudomonas putida (strain GB-1) protein is Large ribosomal subunit protein bL12.